The following is a 157-amino-acid chain: Putative pre-16S rRNA nuclease (157 aa).

This sequence belongs to the YqgF nuclease family.

The protein localises to the cytoplasm. Its function is as follows. Could be a nuclease involved in processing of the 5'-end of pre-16S rRNA. The polypeptide is Putative pre-16S rRNA nuclease (Parasynechococcus marenigrum (strain WH8102)).